We begin with the raw amino-acid sequence, 86 residues long: Neurotoxin LmNaTx1 (86 aa).

A signal peptide spans 1–18; the sequence is MKILIIFVIAITVVGVQS. Residues 19–85 enclose the LCN-type CS-alpha/beta domain; the sequence is KDGYPIYSTG…VWTYAENTCG (67 aa). Disulfide bonds link cysteine 33/cysteine 84, cysteine 37/cysteine 58, cysteine 44/cysteine 65, and cysteine 48/cysteine 67. Residue cysteine 84 is modified to Cysteine amide.

It belongs to the long (4 C-C) scorpion toxin superfamily. Sodium channel inhibitor family. Beta subfamily. As to expression, expressed by the venom gland.

It is found in the secreted. In terms of biological role, binds voltage-independently at site-4 of sodium channels (Nav) and shift the voltage of activation toward more negative potentials thereby affecting sodium channel activation and promoting spontaneous and repetitive firing. This chain is Neurotoxin LmNaTx1, found in Lychas mucronatus (Chinese swimming scorpion).